A 109-amino-acid chain; its full sequence is Flagellar hook-basal body complex protein FliE (109 aa).

This sequence belongs to the FliE family.

Its subcellular location is the bacterial flagellum basal body. This is Flagellar hook-basal body complex protein FliE from Pseudomonas fluorescens (strain Pf0-1).